The primary structure comprises 122 residues: Large ribosomal subunit protein uL14c (122 aa).

It belongs to the universal ribosomal protein uL14 family. Part of the 50S ribosomal subunit.

The protein localises to the plastid. It localises to the chloroplast. In terms of biological role, binds to 23S rRNA. This is Large ribosomal subunit protein uL14c from Chlorokybus atmophyticus (Soil alga).